Reading from the N-terminus, the 819-residue chain is Leucine--tRNA ligase (819 aa).

A 'HIGH' region motif is present at residues 36-46; it reads PYPSGKIHMGH. The 'KMSKS' region motif lies at 586 to 590; that stretch reads KMSKS. Lys-589 is an ATP binding site.

This sequence belongs to the class-I aminoacyl-tRNA synthetase family.

The protein localises to the cytoplasm. The catalysed reaction is tRNA(Leu) + L-leucine + ATP = L-leucyl-tRNA(Leu) + AMP + diphosphate. This chain is Leucine--tRNA ligase, found in Wolbachia pipientis subsp. Culex pipiens (strain wPip).